The following is a 1135-amino-acid chain: Protocadherin-18 (1135 aa).

An N-terminal signal peptide occupies residues 1-27 (MHQMNAKMHFRFVFALLIVSFNHDVLG). 6 consecutive Cadherin domains span residues 28-137 (KNLK…SPQF), 138-246 (SRSL…SPAF), 247-354 (EQQS…KPEI), 361-465 (PGKE…PPHF), 466-576 (QRSR…VPVV), and 582-688 (RNNT…STAM). Topologically, residues 28 to 699 (KNLKYRIYEE…SVSQASLDVS (672 aa)) are extracellular. An N-linked (GlcNAc...) asparagine glycan is attached at N103. 5 N-linked (GlcNAc...) asparagine glycosylation sites follow: N269, N420, N559, N583, and N641. Residues 700–720 (MIIIISLGAICAVLLVIMVLF) traverse the membrane as a helical segment. At 721-1135 (ATRCNREKKD…NKLLQDVRQS (415 aa)) the chain is on the cytoplasmic side. Disordered regions lie at residues 769–800 (LPIRSHHRSSPSSSPTLERGQMGSRQSHNSHQ), 869–889 (SLKDSGRGDSEAGDSDYDLGR), 942–1003 (DYRS…STSS), and 1023–1046 (YSECSEVDRSNSLERRKGPLPAKT). The segment covering 791-800 (GSRQSHNSHQ) has biased composition (polar residues). The span at 869-878 (SLKDSGRGDS) shows a compositional bias: basic and acidic residues. The interval 893-1135 (IDRLLGEGFS…NKLLQDVRQS (243 aa)) is interaction with DAB1. Positions 1028-1039 (EVDRSNSLERRK) are enriched in basic and acidic residues.

In terms of assembly, interacts with DAB1. Expressed in all tissues, with highest expression in lung and ovary.

It localises to the cell membrane. Functionally, potential calcium-dependent cell-adhesion protein. This is Protocadherin-18 (PCDH18) from Homo sapiens (Human).